Reading from the N-terminus, the 500-residue chain is Small ribosomal subunit protein uS3m (500 aa).

This sequence belongs to the universal ribosomal protein uS3 family.

It is found in the mitochondrion. This Prototheca wickerhamii protein is Small ribosomal subunit protein uS3m (RPS3).